Here is a 1285-residue protein sequence, read N- to C-terminus: Replicase polyprotein 1TF (1285 aa).

A C4-type; atypical zinc finger spans residues 8 to 28; sequence CMCTPAARVFWNAGQVFCTRC. The 112-residue stretch at 69–180 folds into the Peptidase C31 domain; it reads ECTPSGCCWL…QPFCPFEEAH (112 aa). Residues 69–182 form a PCP1-alpha region; sequence ECTPSGCCWL…FCPFEEAHSS (114 aa). Residues Cys-76 and His-146 each act as for Nsp1-alpha papain-like cysteine proteinase activity in the active site. The interval 269 to 384 is PCP1-beta; it reads PDVFDGKCWL…IFRFGAHKWY (116 aa). The Peptidase C32 domain maps to 269–385; sequence PDVFDGKCWL…FRFGAHKWYG (117 aa). Catalysis depends on for Nsp1-beta papain-like cysteine proteinase activity residues Cys-276 and His-345. 2 disordered regions span residues 752 to 797 and 1050 to 1088; these read PSDP…DAGA and KPVG…SRVS. The span at 775-790 shows a compositional bias: polar residues; sequence APASTTTLVREQTPDN. 4 consecutive transmembrane segments (helical) span residues 1136–1156, 1170–1190, 1211–1231, and 1250–1270; these read LWLQ…CSVV, FLVL…LLLY, VMLS…AALW, and VISG…FLLF.

It localises to the host nucleus. The protein localises to the host cytoplasm. Its subcellular location is the host membrane. Functionally, inhibits host IFN-beta production. Plays a role in the degradation of the host transcriptional activator CREBBP protein. The degradation of host CREBBP which is a key component of the IFN enhanceosome is likely responsible for the inhibition of interferon mediated by Nsp1-alpha. Also participates in the inhibition of host NF-kappa-B activation. Plays a role in the inhibition of the interferon-activated JAK/STAT signal transduction by mediating the ubiquitination and subsequent proteasomal degradation of host KPNA1. In terms of biological role, plays a role in viral replication. The chain is Replicase polyprotein 1TF from Porcine reproductive and respiratory syndrome virus (strain Lelystad) (PRRSV).